The following is a 172-amino-acid chain: Auxin-responsive protein IAA30 (172 aa).

Positions 1-18 (MGRGRSSSSSSIESSCKS) are enriched in low complexity. Residues 1–28 (MGRGRSSSSSSIESSCKSNPFGVSSSNT) form a disordered region. The short motif at 35 to 39 (LRLGL) is the EAR-like (transcriptional repression) element. A PB1 domain is found at 82–171 (SFYVKVNMEG…RRLKISRAYH (90 aa)).

It belongs to the Aux/IAA family. In terms of assembly, homodimers and heterodimers.

The protein resides in the nucleus. In terms of biological role, aux/IAA proteins are short-lived transcriptional factors that function as repressors of early auxin response genes at low auxin concentrations. Repression is thought to result from the interaction with auxin response factors (ARFs), proteins that bind to the auxin-responsive promoter element (AuxRE). Formation of heterodimers with ARF proteins may alter their ability to modulate early auxin response genes expression. This Arabidopsis thaliana (Mouse-ear cress) protein is Auxin-responsive protein IAA30 (IAA30).